The following is a 392-amino-acid chain: Heat-inducible transcription repressor HrcA (392 aa).

Belongs to the HrcA family.

In terms of biological role, negative regulator of class I heat shock genes (grpE-dnaK-dnaJ and groELS operons). Prevents heat-shock induction of these operons. This is Heat-inducible transcription repressor HrcA from Chlamydia trachomatis serovar A (strain ATCC VR-571B / DSM 19440 / HAR-13).